The primary structure comprises 486 residues: FAD-dependent oxidoreductase domain-containing protein 1 (486 aa).

Residues 66-82 form a helical membrane-spanning segment; that stretch reads VVIVGGGVLGLSVAYWL.

In terms of assembly, associates with components of the mitochondrial respiratory chain complex I. FAD is required as a cofactor.

It is found in the mitochondrion inner membrane. Required for the assembly of the mitochondrial membrane respiratory chain NADH dehydrogenase (Complex I). Involved in mid-late stages of complex I assembly. This Bos taurus (Bovine) protein is FAD-dependent oxidoreductase domain-containing protein 1 (FOXRED1).